Here is a 292-residue protein sequence, read N- to C-terminus: Peroxisomal 2,4-dienoyl-CoA reductase [(3E)-enoyl-CoA-producing] (292 aa).

Ala2 carries the N-acetylalanine modification. NADP(+)-binding positions include 35–40 (GGGSGI), 60–64 (RSLQK), and Asp86. Arg60 lines the substrate pocket. At Lys64 the chain carries N6-acetyllysine. Residues Arg88, Phe118, and 126–128 (SFN) each bind substrate. An N6-acetyllysine modification is found at Lys151. Residues Lys182 and 208-214 (PGAISGT) contribute to the NADP(+) site. Position 219 (Arg219) interacts with substrate. The residue at position 287 (Ser287) is a Phosphoserine. A Microbody targeting signal motif is present at residues 290–292 (AKL). Lys291 is modified (N6-acetyllysine).

The protein belongs to the short-chain dehydrogenases/reductases (SDR) family. 2,4-dienoyl-CoA reductase subfamily. Monomer, dimer and oligomer.

It localises to the peroxisome. It catalyses the reaction a (2E,4Z)-dienoyl-CoA + NADPH + H(+) = a 4,5-saturated-(3E)-enoyl-CoA + NADP(+). The enzyme catalyses a (2E,4E)-dienoyl-CoA + NADPH + H(+) = a 4,5-saturated-(3E)-enoyl-CoA + NADP(+). The catalysed reaction is (2E,4E)-hexadienoyl-CoA + NADPH + H(+) = (3E)-hexenoyl-CoA + NADP(+). It carries out the reaction (2E,4E)-decadienoyl-CoA + NADPH + H(+) = (3E)-decenoyl-CoA + NADP(+). It catalyses the reaction (2E,4Z,7Z,10Z,13Z,16Z,19Z)-docosaheptaenoyl-CoA + NADPH + H(+) = (3E,7Z,10Z,13Z,16Z,19Z)-docosahexaenoyl-CoA + NADP(+). In terms of biological role, auxiliary enzyme of beta-oxidation. Participates in the degradation of unsaturated fatty enoyl-CoA esters having double bonds in both even- and odd-numbered positions in peroxisome. Catalyzes the NADP-dependent reduction of 2,4-dienoyl-CoA to yield trans-3-enoyl-CoA. Has activity towards short and medium chain 2,4-dienoyl-CoAs, but also towards 2,4,7,10,13,16,19-docosaheptaenoyl-CoA, suggesting that it does not constitute a rate limiting step in the peroxisomal degradation of docosahexaenoic acid. The polypeptide is Peroxisomal 2,4-dienoyl-CoA reductase [(3E)-enoyl-CoA-producing] (Decr2) (Mus musculus (Mouse)).